The chain runs to 64 residues: DNA gyrase inhibitor YacG (64 aa).

The Zn(2+) site is built by Cys6, Cys9, Cys25, and Cys29.

It belongs to the DNA gyrase inhibitor YacG family. In terms of assembly, interacts with GyrB. Zn(2+) serves as cofactor.

Functionally, inhibits all the catalytic activities of DNA gyrase by preventing its interaction with DNA. Acts by binding directly to the C-terminal domain of GyrB, which probably disrupts DNA binding by the gyrase. The chain is DNA gyrase inhibitor YacG from Haemophilus influenzae (strain ATCC 51907 / DSM 11121 / KW20 / Rd).